Here is a 370-residue protein sequence, read N- to C-terminus: MHFESPIKRRHSRQIMVGNVPVGGGAPISVQSMTNTETCDVDATVAQIRAIADAGADIVRVSIPSMDAAEAFKKIREAVSIPLVADIHFDYKIALKVAEYGVDCLRINPGNIGNKDRIRAVVDCARDKNIPIRIGVNAGSLEKDLQKKYGEPTPDALVESAFRQIQYFDELDFHEYKLSLKASDIFMTVEAYRKIASQIDNPLHLGITEAGGLRSGTVKSSIGLGLLLMDGIGDTLRVSLAADPVHEIKVGWDMLRSLKLRNRGINFIACPSCSRQNFDVIKTMNELEERLDDITIPMDVAVIGCVVNGPGEAKEADIGLAGGSPNNLIYQDGKPDSKTKNETLVDDLERMIRKKALLKEQELANIIVKN.

Cys-270, Cys-273, Cys-305, and Glu-312 together coordinate [4Fe-4S] cluster.

It belongs to the IspG family. [4Fe-4S] cluster is required as a cofactor.

The enzyme catalyses (2E)-4-hydroxy-3-methylbut-2-enyl diphosphate + oxidized [flavodoxin] + H2O + 2 H(+) = 2-C-methyl-D-erythritol 2,4-cyclic diphosphate + reduced [flavodoxin]. It participates in isoprenoid biosynthesis; isopentenyl diphosphate biosynthesis via DXP pathway; isopentenyl diphosphate from 1-deoxy-D-xylulose 5-phosphate: step 5/6. In terms of biological role, converts 2C-methyl-D-erythritol 2,4-cyclodiphosphate (ME-2,4cPP) into 1-hydroxy-2-methyl-2-(E)-butenyl 4-diphosphate. The protein is 4-hydroxy-3-methylbut-2-en-1-yl diphosphate synthase (flavodoxin) of Marinomonas sp. (strain MWYL1).